Here is an 88-residue protein sequence, read N- to C-terminus: Co-chaperonin GroES (88 aa).

Belongs to the GroES chaperonin family. As to quaternary structure, heptamer of 7 subunits arranged in a ring. Interacts with the chaperonin GroEL.

It is found in the cytoplasm. Its function is as follows. Together with the chaperonin GroEL, plays an essential role in assisting protein folding. The GroEL-GroES system forms a nano-cage that allows encapsulation of the non-native substrate proteins and provides a physical environment optimized to promote and accelerate protein folding. GroES binds to the apical surface of the GroEL ring, thereby capping the opening of the GroEL channel. The chain is Co-chaperonin GroES from Treponema denticola (strain ATCC 35405 / DSM 14222 / CIP 103919 / JCM 8153 / KCTC 15104).